The following is a 201-amino-acid chain: Recombination protein RecR (201 aa).

The C4-type zinc finger occupies 60-75 (CSCCGNVDTSDPCTIC). The Toprim domain maps to 83-178 (ATLIVVEDVS…RVTRLAHGVP (96 aa)).

The protein belongs to the RecR family.

In terms of biological role, may play a role in DNA repair. It seems to be involved in an RecBC-independent recombinational process of DNA repair. It may act with RecF and RecO. The protein is Recombination protein RecR of Brucella melitensis biotype 2 (strain ATCC 23457).